The sequence spans 882 residues: Liprin-beta-2 (882 aa).

The stretch at Ala101 to Thr303 forms a coiled coil. Ser328, Ser362, and Ser386 each carry phosphoserine. The interval Arg339–Lys554 is disordered. Positions Glu388–Val399 are enriched in basic and acidic residues. Composition is skewed to polar residues over residues Pro442–Lys457 and Ser481–Val495. A phosphoserine mark is found at Ser502 and Ser518. The segment covering Ser502–Arg515 has biased composition (basic residues). SAM domains lie at Trp564 to Lys628, Leu636 to Asn699, and Trp724 to Ala789.

This sequence belongs to the liprin family. Liprin-beta subfamily. Forms homodimers and heterodimers. In terms of tissue distribution, expressed widely. Strong expression in liver, kidney, intestine, heart, lung and testis. Low expression in brain and thymus.

May regulate the disassembly of focal adhesions. Did not bind receptor-like tyrosine phosphatases type 2A. The polypeptide is Liprin-beta-2 (Ppfibp2) (Mus musculus (Mouse)).